A 558-amino-acid chain; its full sequence is Solute carrier family 22 member 6-A (558 aa).

The Cytoplasmic portion of the chain corresponds to 1–15; sequence MSFAELLERTGGMGR. Residues 16-36 traverse the membrane as a helical segment; that stretch reads FQITQVALMCFPILLMASHNL. At 37–140 the chain is on the extracellular side; it reads LQNFSAAIPD…LVCGHKNRRQ (104 aa). The helical transmembrane segment at 141 to 161 threads the bilayer; sequence LAQSVYMGGVLVGAIILGGLS. Residues 162-167 lie on the Cytoplasmic side of the membrane; it reads DRYGRR. A helical membrane pass occupies residues 168 to 188; the sequence is ALLIWSYFQMAVSGLCSAFSP. Residues 189–197 lie on the Extracellular side of the membrane; sequence NYLSYCIFR. The chain crosses the membrane as a helical span at residues 198–218; that stretch reads FLTGMALSGIGLNTTALIVEW. At 219-225 the chain is on the cytoplasmic side; the sequence is VPTRVRT. A helical transmembrane segment spans residues 226–246; sequence ITGTLAGFSYTVGQLLLAGLA. The Extracellular portion of the chain corresponds to 247-253; sequence YAMRDWR. The chain crosses the membrane as a helical span at residues 254–274; the sequence is WLQLCVSLPFFIFFLYSWWFP. Residues 275–342 lie on the Cytoplasmic side of the membrane; that stretch reads ESARWLVLSG…DLIRTSTIRR (68 aa). The helical transmembrane segment at 343–363 threads the bilayer; that stretch reads ISCALSLVWFSTSFAYYGLAM. Over 364 to 369 the chain is Extracellular; sequence DLQNFN. A helical membrane pass occupies residues 370-390; sequence VSIYLIQVIFGAVDFPAKIFS. Topologically, residues 391-400 are cytoplasmic; it reads TTAMIYVGRK. The helical transmembrane segment at 401–421 threads the bilayer; the sequence is FTQLMSLILGGVVILANSFVP. Topologically, residues 422-428 are extracellular; it reads HEMQTVR. Residues 429-449 form a helical membrane-spanning segment; it reads TGMAVFGKGCLAASFSCVFLY. At 450 to 462 the chain is on the cytoplasmic side; it reads TTELYPTVIRQSG. Residues 463 to 483 form a helical membrane-spanning segment; the sequence is LGLCSTMARIGGIVAPLVKIL. The Extracellular segment spans residues 484–488; it reads GEYYP. Residues 489-509 form a helical membrane-spanning segment; that stretch reads FLPLVIYGGAPIISGLCVFFL. Residues 510-558 are Cytoplasmic-facing; that stretch reads PETVNKPLPDTIEEVEKRIKAPKKENEMNEIVSLKKKEGMKENPVNDVL. The span at 539-550 shows a compositional bias: basic and acidic residues; the sequence is EIVSLKKKEGMK. Residues 539 to 558 form a disordered region; that stretch reads EIVSLKKKEGMKENPVNDVL.

The protein belongs to the major facilitator (TC 2.A.1) superfamily. Organic cation transporter (TC 2.A.1.19) family. Glycosylated. Glycosylation is necessary for proper targeting of the transporter to the plasma membrane.

It localises to the cell membrane. It is found in the basolateral cell membrane. Its subcellular location is the basal cell membrane. Its function is as follows. Involved in the renal elimination of endogenous and exogenous organic anions. Mediates the sodium-independent uptake of p-aminohippurate (PAH), 2,3-dimercapto-1-propanesulfonic acid (DMPS), cidofovir, adefovir, 9-(2-phosphonylmethoxyethyl) guanine (PMEG), 9-(2-phosphonylmethoxyethyl) diaminopurine (PMEDAP), ochratoxin (OTA), acyclovir (ACV), 3'-azido-3-'deoxythymidine (AZT), cimetidine (CMD), 2,4-dichloro-phenoxyacetate (2,4-D), hippurate (HA), indoleacetate (IA), indoxyl sulfate (IS) and 3-carboxy-4-methyl-5-propyl-2-furanpropionate (CMPF) and edaravone sulfate. PAH uptake is inhibited by p-chloromercuribenzenesulphonate (PCMBS), diethyl pyrocarbonate (DEPC), indomethacin, sulindac, diclofenac, carprofen, okadaic acid, benzothiazolylcysteine (BTC), S-chlorotrifluoroethylcysteine (CTFC), cysteine S-conjugates S-dichlorovinylcysteine (DCVC), furosemide, steviol, phorbol 12-myristate 13-acetate (PMA), calcium ionophore A23187, benzylpenicillin, bumetamide, losartan, probenecid, phenol red, urate, glutarate and alpha-ketoglutarate. The polypeptide is Solute carrier family 22 member 6-A (slc22a6-a) (Xenopus laevis (African clawed frog)).